The sequence spans 298 residues: MFNNDKVKIGICPIGWTNDDMPDLGKENTFEQAVSEMALAGFKGTEIGNKYPKDVKVLKRALEMRNLQIASAWFSSFLTTKPYEETEKEFIAHRDFLHAMGSKVIVVSEQGHSIQGQMETPIFDGKHHFNEEEWNLLAHGLNKLGQLAADKEMRIVYHHHMGTGVQTTEEIDKLMSVTDENLVYLLFDTGHLVYSGENPVEILKKYVQRIKHVHLKDIRPEIVSKVKNEKLSFLKGVRAGAFTVPGDGSIDFEPIFKILAENNYEGWLMIEAEQDPSIANPLEYAIKGRQYIKEKASI.

It belongs to the IolE/MocC family. The cofactor is glutathione. Requires Co(2+) as cofactor. Mn(2+) serves as cofactor.

It catalyses the reaction scyllo-inosose = 3D-3,5/4-trihydroxycyclohexane-1,2-dione + H2O. Its pathway is polyol metabolism; myo-inositol degradation into acetyl-CoA; acetyl-CoA from myo-inositol: step 2/7. Catalyzes the dehydration of inosose (2-keto-myo-inositol, 2KMI or 2,4,6/3,5-pentahydroxycyclohexanone) to 3D-(3,5/4)-trihydroxycyclohexane-1,2-dione (D-2,3-diketo-4-deoxy-epi-inositol). This is Inosose dehydratase from Clostridium botulinum (strain Eklund 17B / Type B).